The following is a 252-amino-acid chain: 2-succinyl-6-hydroxy-2,4-cyclohexadiene-1-carboxylate synthase (252 aa).

This sequence belongs to the AB hydrolase superfamily. MenH family. Monomer.

It carries out the reaction 5-enolpyruvoyl-6-hydroxy-2-succinyl-cyclohex-3-ene-1-carboxylate = (1R,6R)-6-hydroxy-2-succinyl-cyclohexa-2,4-diene-1-carboxylate + pyruvate. It functions in the pathway quinol/quinone metabolism; 1,4-dihydroxy-2-naphthoate biosynthesis; 1,4-dihydroxy-2-naphthoate from chorismate: step 3/7. It participates in quinol/quinone metabolism; menaquinone biosynthesis. Catalyzes a proton abstraction reaction that results in 2,5-elimination of pyruvate from 2-succinyl-5-enolpyruvyl-6-hydroxy-3-cyclohexene-1-carboxylate (SEPHCHC) and the formation of 2-succinyl-6-hydroxy-2,4-cyclohexadiene-1-carboxylate (SHCHC). This is 2-succinyl-6-hydroxy-2,4-cyclohexadiene-1-carboxylate synthase from Escherichia coli O17:K52:H18 (strain UMN026 / ExPEC).